A 456-amino-acid chain; its full sequence is Exodeoxyribonuclease 7 large subunit (456 aa).

Belongs to the XseA family. Heterooligomer composed of large and small subunits.

The protein resides in the cytoplasm. It carries out the reaction Exonucleolytic cleavage in either 5'- to 3'- or 3'- to 5'-direction to yield nucleoside 5'-phosphates.. Bidirectionally degrades single-stranded DNA into large acid-insoluble oligonucleotides, which are then degraded further into small acid-soluble oligonucleotides. The protein is Exodeoxyribonuclease 7 large subunit of Lactobacillus delbrueckii subsp. bulgaricus (strain ATCC 11842 / DSM 20081 / BCRC 10696 / JCM 1002 / NBRC 13953 / NCIMB 11778 / NCTC 12712 / WDCM 00102 / Lb 14).